The following is a 226-amino-acid chain: ATP synthase subunit a (226 aa).

Transmembrane regions (helical) follow at residues 22–42 (SMNWLFMMLPIIIFPSIFWLI), 73–93 (IIIFISLMLYIMITNIFSLIP), 102–122 (LLLNMILSLTLWFSFLIYLIY), 135–155 (LNSPVFLMNFMVIIELISLII), 173–193 (LILTLLGIFISNFISILPINL), and 202–222 (LEIFMSMIQSYVFSILLILYF).

This sequence belongs to the ATPase A chain family. In terms of assembly, F-type ATPases have 2 components, CF(1) - the catalytic core - and CF(0) - the membrane proton channel. CF(1) has five subunits: alpha(3), beta(3), gamma(1), delta(1), epsilon(1). CF(0) has three main subunits: a, b and c.

It localises to the mitochondrion inner membrane. In terms of biological role, mitochondrial membrane ATP synthase (F(1)F(0) ATP synthase or Complex V) produces ATP from ADP in the presence of a proton gradient across the membrane which is generated by electron transport complexes of the respiratory chain. F-type ATPases consist of two structural domains, F(1) - containing the extramembraneous catalytic core and F(0) - containing the membrane proton channel, linked together by a central stalk and a peripheral stalk. During catalysis, ATP synthesis in the catalytic domain of F(1) is coupled via a rotary mechanism of the central stalk subunits to proton translocation. Key component of the proton channel; it may play a direct role in the translocation of protons across the membrane. The chain is ATP synthase subunit a (ATP6) from Apis mellifera ligustica (Common honeybee).